The sequence spans 893 residues: Protein kintoun (893 aa).

Disordered regions lie at residues 211-243 (KNATAEEREPHPLEHTYPKKPEANAGKPKVLPM), 372-395 (LSREDSGVELNSNSESPAEDEEAG), 587-719 (EQVH…SIDD), 781-821 (QRKK…QQTA), and 834-893 (PQNN…DEDM). The segment covering 214 to 232 (TAEEREPHPLEHTYPKKPE) has biased composition (basic and acidic residues). Position 377 is a phosphoserine (Ser-377). Over residues 594-603 (QQEEEEEEEQ) the composition is skewed to acidic residues. A compositionally biased stretch (basic residues) spans 609–626 (HQHKKGNKKQRKRNKKQR). Residues 640 to 651 (QQQQHQKQQQQQ) are compositionally biased toward low complexity. Composition is skewed to polar residues over residues 656 to 667 (ENSSPESLNAGS) and 684 to 694 (FSECNDSSSVQ). Low complexity predominate over residues 709 to 719 (SISESSSSIDD). Positions 781–797 (QRKKNQKRRDCKLRAQQ) are enriched in basic residues. Position 801 is a phosphoserine (Ser-801). The span at 836–848 (NNNNRSYSKNNKN) shows a compositional bias: low complexity. Positions 865–877 (NNEEDTKRNEADA) are enriched in basic and acidic residues. Residues 884 to 893 (EMDDDDDEDM) show a composition bias toward acidic residues.

This sequence belongs to the PIH1 family. Kintoun subfamily. In terms of assembly, interacts with Pp1alpha-96A, Pp1-87B, Pp1-13C and flw.

Its subcellular location is the cytoplasm. In terms of biological role, required for cytoplasmic pre-assembly of axonemal dyneins, thereby playing a central role in motility in cilia and flagella. Involved in pre-assembly of dynein arm complexes in the cytoplasm before intraflagellar transport loads them for the ciliary compartment. The protein is Protein kintoun of Drosophila grimshawi (Hawaiian fruit fly).